The chain runs to 202 residues: NADH-quinone oxidoreductase subunit C (202 aa).

It belongs to the complex I 30 kDa subunit family. In terms of assembly, NDH-1 is composed of 14 different subunits. Subunits NuoB, C, D, E, F, and G constitute the peripheral sector of the complex.

Its subcellular location is the cell inner membrane. The enzyme catalyses a quinone + NADH + 5 H(+)(in) = a quinol + NAD(+) + 4 H(+)(out). NDH-1 shuttles electrons from NADH, via FMN and iron-sulfur (Fe-S) centers, to quinones in the respiratory chain. The immediate electron acceptor for the enzyme in this species is believed to be ubiquinone. Couples the redox reaction to proton translocation (for every two electrons transferred, four hydrogen ions are translocated across the cytoplasmic membrane), and thus conserves the redox energy in a proton gradient. This chain is NADH-quinone oxidoreductase subunit C, found in Hyphomonas neptunium (strain ATCC 15444).